The sequence spans 626 residues: Chaperone protein HtpG (626 aa).

Positions 1–341 (METKQFKAES…SEDLSLNISR (341 aa)) are a; substrate-binding. Residues 342–552 (EMLQHDRQLK…EGEISIEMEK (211 aa)) are b. The tract at residues 553–626 (ILSAMPNNEN…FSNSICKLMI (74 aa)) is c.

This sequence belongs to the heat shock protein 90 family. As to quaternary structure, homodimer.

The protein resides in the cytoplasm. In terms of biological role, molecular chaperone. Has ATPase activity. This Alkaliphilus oremlandii (strain OhILAs) (Clostridium oremlandii (strain OhILAs)) protein is Chaperone protein HtpG.